Reading from the N-terminus, the 577-residue chain is Hemagglutinin-neuraminidase (577 aa).

Over 1–26 the chain is Intravirion; that stretch reads MDRAVSQVALENDEREAKNTWRLIFR. The helical transmembrane segment at 27 to 47 threads the bilayer; it reads IAILLLTVVTLATSVASLVYS. Over 48–577 the chain is Virion surface; that stretch reads MGASTPSDLV…NDGVREARSG (530 aa). The N-linked (GlcNAc...) asparagine; by host glycan is linked to Asn-119. The segment at 124-152 is important for interaction with fusion/F protein; that stretch reads GAPIHDPDFIGGIGKELIVDDASDVTSFY. 3 cysteine pairs are disulfide-bonded: Cys-172/Cys-196, Cys-186/Cys-247, and Cys-238/Cys-251. The segment at 234–239 is involved in neuraminidase activity; sequence NRKSCS. Asn-341 and Asn-433 each carry an N-linked (GlcNAc...) asparagine; by host glycan. 2 disulfides stabilise this stretch: Cys-344–Cys-461 and Cys-455–Cys-465. N-linked (GlcNAc...) asparagine; by host glycans are attached at residues Asn-481 and Asn-538. A disulfide bridge connects residues Cys-531 and Cys-542.

The protein belongs to the paramyxoviruses hemagglutinin-neuraminidase family. In terms of assembly, homotetramer; composed of disulfide-linked homodimers. Interacts with F protein trimer. Interacts with host CG-1B; this interaction inhibits viral adsorption and replication rather than internalization.

It localises to the virion membrane. It is found in the host cell membrane. It catalyses the reaction Hydrolysis of alpha-(2-&gt;3)-, alpha-(2-&gt;6)-, alpha-(2-&gt;8)- glycosidic linkages of terminal sialic acid residues in oligosaccharides, glycoproteins, glycolipids, colominic acid and synthetic substrates.. Its function is as follows. Mediates the viral entry into the host cell together with fusion/F protein. Attaches the virus to sialic acid-containing cell receptors and thereby initiates infection. Binding of HN protein to the receptor induces a conformational change that allows the F protein to trigger virion/cell membranes fusion. Neuraminidase activity ensures the efficient spread of the virus by dissociating the mature virions from the neuraminic acid containing glycoproteins. This Gallus gallus (Chicken) protein is Hemagglutinin-neuraminidase (HN).